Here is a 393-residue protein sequence, read N- to C-terminus: Ubiquitin-like modifier-activating enzyme 5 (393 aa).

Positions 75, 96, 119, 142, and 175 each coordinate ATP. Zn(2+)-binding residues include C217 and C220. The Glycyl thioester intermediate role is filled by C241. Zn(2+)-binding residues include C294 and C299.

It belongs to the ubiquitin-activating E1 family. UBA5 subfamily.

Functionally, E1-like enzyme which activates UFM1. This Bombyx mori (Silk moth) protein is Ubiquitin-like modifier-activating enzyme 5.